The following is a 279-amino-acid chain: Large ribosomal subunit protein uL2 (279 aa).

A disordered region spans residues 227–279 (GVAMNPVDHPMGGGEGKTSGGRHPVSPWGFPTKGKKTRDPNKLSSKFIKSKKR).

The protein belongs to the universal ribosomal protein uL2 family. As to quaternary structure, part of the 50S ribosomal subunit. Forms a bridge to the 30S subunit in the 70S ribosome.

One of the primary rRNA binding proteins. Required for association of the 30S and 50S subunits to form the 70S ribosome, for tRNA binding and peptide bond formation. It has been suggested to have peptidyltransferase activity; this is somewhat controversial. Makes several contacts with the 16S rRNA in the 70S ribosome. The chain is Large ribosomal subunit protein uL2 from Neorickettsia sennetsu (strain ATCC VR-367 / Miyayama) (Ehrlichia sennetsu).